The following is a 1067-amino-acid chain: Hemoglobin and hemoglobin-haptoglobin-binding protein B (1067 aa).

The signal sequence occupies residues 1 to 24 (MTNFKFSLLACSIAFALNASTAYA). 6 repeat units span residues 26 to 29 (QPTN), 30 to 33 (QPTN), 34 to 37 (QPTN), 38 to 41 (QPTN), 42 to 45 (QPTN), and 46 to 49 (QPTN). Positions 26–49 (QPTNQPTNQPTNQPTNQPTNQPTN) are 6 X 4 AA tandem repeats of Q-P-T-N. Positions 26-51 (QPTNQPTNQPTNQPTNQPTNQPTNQN) are enriched in low complexity. Residues 26–53 (QPTNQPTNQPTNQPTNQPTNQPTNQNSN) are disordered. A TonB box motif is present at residues 59–66 (EQINVSGS). In terms of domain architecture, TBDR plug spans 71–196 (NIKEKKVGET…LGGSVIFETK (126 aa)). In terms of domain architecture, TBDR beta-barrel spans 204–1067 (DKDYYLSYKR…NYRMSVQFEF (864 aa)). Residues 1050 to 1067 (NRFYAPGRNYRMSVQFEF) carry the TonB C-terminal box motif.

Belongs to the TonB-dependent receptor family. Hemoglobin/haptoglobin binding protein subfamily.

Its subcellular location is the cell outer membrane. Functionally, acts as a receptor for hemoglobin or the hemoglobin/haptoglobin complex of the human host and is required for heme uptake. This is Hemoglobin and hemoglobin-haptoglobin-binding protein B (hgbB) from Haemophilus influenzae.